Reading from the N-terminus, the 258-residue chain is Snake venom serine protease HS114 (258 aa).

Residues 1-18 (MVLVRVVANLLILQLSYA) form the signal peptide. Positions 19–24 (QKVSEL) are excised as a propeptide. In terms of domain architecture, Peptidase S1 spans 25 to 249 (VVGGDECNIN…YNTWIESVIA (225 aa)). 6 cysteine pairs are disulfide-bonded: Cys-31-Cys-163, Cys-50-Cys-66, Cys-98-Cys-256, Cys-142-Cys-210, Cys-174-Cys-189, and Cys-200-Cys-225. An N-linked (GlcNAc...) asparagine glycan is attached at Asn-44. Catalysis depends on charge relay system residues His-65 and Asp-110. The Charge relay system role is filled by Ser-204.

Belongs to the peptidase S1 family. Snake venom subfamily. As to quaternary structure, monomer. Post-translationally, N-glycosylated. Contains approximately 10% carbohydrates. As to expression, expressed by the venom gland.

Its subcellular location is the secreted. With respect to regulation, inhibited by benzamidine, PMSF, leupeptin, SDS and DTT, but not by EDTA, and commercial antivenom. Its function is as follows. Snake venom serine protease that shows non-specific action on fibrinogen. It preferentially degrades fibrinogen Aalpha (FGA), releasing fibrinopeptide A, and shows a lower activity on fibrinogen Bbeta (FGB), releasing fibrinopeptide B and other uncommon fibrinopeptides. Also shows low fibrinolytic activity compared to plasmin. Has high enzymatic activity on the substrates for activated protein C and factor XIa, and for thrombin. Shows a wide activity spectrum at different peptide sequences, with a preferential cleavage at Lys-|-Xaa over Arg-|-Xaa bonds. The protein is Snake venom serine protease HS114 of Bothrops jararaca (Jararaca).